Reading from the N-terminus, the 510-residue chain is Zinc finger protein 692 (510 aa).

Disordered regions lie at residues 1–20 (MAAS…RQLD) and 121–306 (WGPS…EDTA). Residue Ser-161 is modified to Phosphoserine. Positions 163-172 (CDERAQEARM) are enriched in basic and acidic residues. Residues 188–201 (EDGEEEEEDEEEML) are compositionally biased toward acidic residues. Residue Ser-225 is modified to Phosphoserine. Residues 237–265 (APAPAAVPAPLASPSSSASSLGSGAPGPV) are compositionally biased toward low complexity. Polar residues predominate over residues 278 to 297 (QADQQTEPLASPGSQAQSAL). 5 C2H2-type zinc fingers span residues 322-347 (LPCD…KYQH), 353-377 (FSCP…VKLH), 383-405 (YICE…RRIH), 411-433 (LQCE…RRKH), and 442-465 (FPCE…SKSH). Ser-464 is modified (phosphoserine).

Belongs to the krueppel C2H2-type zinc-finger protein family. Phosphorylation at Ser-464 results in loss of DNA-binding activity.

Its subcellular location is the nucleus. May act as an transcriptional repressor for PCK1 gene expression, in turn may participate in the hepatic gluconeogenesis regulation through the activated AMPK signaling pathway. This is Zinc finger protein 692 from Bos taurus (Bovine).